The following is a 244-amino-acid chain: Haloacid dehalogenase-like hydrolase domain-containing protein Sgpp (244 aa).

Asp28 functions as the Nucleophile in the catalytic mechanism. Positions 28, 30, and 189 each coordinate Mg(2+). Catalysis depends on Asp30, which acts as the Proton donor.

This sequence belongs to the HAD-like hydrolase superfamily. DOG/GPP family. Mg(2+) serves as cofactor. As to expression, ubiquitous with highest expression in flowers.

Acts as a phosphosugar phosphatase on a broad range of sugar phosphate substrates with preferential activity on D-ribose-5-phosphate, 2-deoxy-D-ribose-5-phosphate, 2-deoxy-D-glucose-6-phosphate, and D-mannose-6-phosphate and with a lower activity on D-fructose-1-phosphate, D-glucose-6-phosphate, DL-glycerol-3-phosphate, and D-fructose-6-phosphate. This is Haloacid dehalogenase-like hydrolase domain-containing protein Sgpp (SGPP) from Arabidopsis thaliana (Mouse-ear cress).